We begin with the raw amino-acid sequence, 249 residues long: tRNA (guanine-N(1)-)-methyltransferase (249 aa).

S-adenosyl-L-methionine-binding positions include Gly-112 and 132 to 137 (LGDFVL).

This sequence belongs to the RNA methyltransferase TrmD family. In terms of assembly, homodimer.

It is found in the cytoplasm. The catalysed reaction is guanosine(37) in tRNA + S-adenosyl-L-methionine = N(1)-methylguanosine(37) in tRNA + S-adenosyl-L-homocysteine + H(+). In terms of biological role, specifically methylates guanosine-37 in various tRNAs. In Citrifermentans bemidjiense (strain ATCC BAA-1014 / DSM 16622 / JCM 12645 / Bem) (Geobacter bemidjiensis), this protein is tRNA (guanine-N(1)-)-methyltransferase.